An 820-amino-acid chain; its full sequence is TORTIFOLIA1-like protein 2 (820 aa).

5 HEAT repeats span residues 61–98 (DKVS…FHEG), 102–139 (PYLG…KMSC), 146–183 (GVFV…SSPE), 187–224 (AIIQ…AGGA), and 228–265 (SVLS…TGEK). Low complexity predominate over residues 304 to 321 (PGSDSPEPSETESSVKES). Disordered stretches follow at residues 304–325 (PGSD…YNGA), 357–377 (PVSA…SNQD), and 584–644 (GSTI…GKTG). Basic and acidic residues predominate over residues 367–377 (YNDDPRKSNQD). A compositionally biased stretch (polar residues) spans 584–613 (GSTISPRLSSCTSRTSTDIRNRQSTLSTSK).

The protein is TORTIFOLIA1-like protein 2 of Arabidopsis thaliana (Mouse-ear cress).